The chain runs to 635 residues: ATP-dependent zinc metalloprotease FtsH (635 aa).

The Cytoplasmic portion of the chain corresponds to 1-6; the sequence is MNNQGR. Residues 7 to 27 form a helical membrane-spanning segment; sequence SILTWAALFVFVILLFNVFQS. Over 28–103 the chain is Periplasmic; it reads DGLLGGRNNI…VVPLETRMNT (76 aa). The chain crosses the membrane as a helical span at residues 104-124; it reads FLGFLISWFPMLLLIGVWVFF. Residues 125-635 lie on the Cytoplasmic side of the membrane; sequence MRQMHGGGKA…KKAKKESTNI (511 aa). Position 195–202 (195–202) interacts with ATP; the sequence is GPPGTGKT. His417 serves as a coordination point for Zn(2+). The active site involves Glu418. Residues His421 and Asp495 each contribute to the Zn(2+) site. A disordered region spans residues 600–635; it reads SEEENKFPFNDSPTIKIDKEKSPEKAKKAKKESTNI. A compositionally biased stretch (basic and acidic residues) spans 615–635; the sequence is KIDKEKSPEKAKKAKKESTNI.

This sequence in the central section; belongs to the AAA ATPase family. The protein in the C-terminal section; belongs to the peptidase M41 family. As to quaternary structure, homohexamer. Zn(2+) serves as cofactor.

It is found in the cell inner membrane. Functionally, acts as a processive, ATP-dependent zinc metallopeptidase for both cytoplasmic and membrane proteins. Plays a role in the quality control of integral membrane proteins. In Rickettsia felis (strain ATCC VR-1525 / URRWXCal2) (Rickettsia azadi), this protein is ATP-dependent zinc metalloprotease FtsH.